We begin with the raw amino-acid sequence, 278 residues long: Nudix hydrolase 2 (278 aa).

Residues 110 to 242 form the Nudix hydrolase domain; it reads SHRVGIGAFV…ELLRYMTDIC (133 aa). The Nudix box motif lies at 147 to 168; that stretch reads GVVNEGEDIHDGSVREVKEETG. Glutamate 162 is a Mg(2+) binding site. The active-site Proton acceptor is the glutamate 165. Glutamate 166 serves as a coordination point for Mg(2+).

The protein belongs to the Nudix hydrolase family. Requires Mg(2+) as cofactor. Mn(2+) is required as a cofactor. In terms of tissue distribution, expressed in roots, stems and leaves.

It carries out the reaction ADP-D-ribose + H2O = D-ribose 5-phosphate + AMP + 2 H(+). The enzyme catalyses NAD(+) + H2O = beta-nicotinamide D-ribonucleotide + AMP + 2 H(+). It catalyses the reaction NADH + H2O = reduced beta-nicotinamide D-ribonucleotide + AMP + 2 H(+). Probably mediates the hydrolysis of some nucleoside diphosphate derivatives. In vitro, it can use both NADH and ADP-ribose as substrates; however the relevance of such substrates in vivo is unclear. Confers tolerance to oxidative stress. The polypeptide is Nudix hydrolase 2 (Arabidopsis thaliana (Mouse-ear cress)).